The chain runs to 309 residues: uncharacterized protein (309 aa).

One can recognise an RPE1 insert domain in the interval 9 to 55 (NFLYNIANKDGFKGYKECRTSAYKNVFDDSSTKSTSKFHLGISDTKN). A helical membrane pass occupies residues 62 to 82 (IIGLILIIFAGVLFYAYILQH).

This sequence belongs to the LicD transferase family.

It is found in the membrane. This is an uncharacterized protein from Rickettsia typhi (strain ATCC VR-144 / Wilmington).